Consider the following 220-residue polypeptide: Ribonuclease HII (220 aa).

Residues 27–220 form the RNase H type-2 domain; sequence CIIVGVDEVG…SKISYMFKNS (194 aa). Positions 33, 34, and 128 each coordinate a divalent metal cation.

It belongs to the RNase HII family. It depends on Mn(2+) as a cofactor. Mg(2+) serves as cofactor.

Its subcellular location is the cytoplasm. It catalyses the reaction Endonucleolytic cleavage to 5'-phosphomonoester.. In terms of biological role, endonuclease that specifically degrades the RNA of RNA-DNA hybrids. This is Ribonuclease HII from Ehrlichia ruminantium (strain Gardel).